The chain runs to 209 residues: Pyridoxine/pyridoxamine 5'-phosphate oxidase (209 aa).

Residues 5-8 (REEY) and lysine 63 contribute to the substrate site. Residues 58 to 63 (RVVLLK), 73 to 74 (FT), arginine 79, lysine 80, and glutamine 102 each bind FMN. Residues tyrosine 120, arginine 124, and serine 128 each coordinate substrate. FMN-binding positions include 137-138 (QS) and tryptophan 181. A substrate-binding site is contributed by 187–189 (RLH). FMN is bound at residue arginine 191.

It belongs to the pyridoxamine 5'-phosphate oxidase family. Homodimer. Requires FMN as cofactor.

The enzyme catalyses pyridoxamine 5'-phosphate + O2 + H2O = pyridoxal 5'-phosphate + H2O2 + NH4(+). It carries out the reaction pyridoxine 5'-phosphate + O2 = pyridoxal 5'-phosphate + H2O2. Its pathway is cofactor metabolism; pyridoxal 5'-phosphate salvage; pyridoxal 5'-phosphate from pyridoxamine 5'-phosphate: step 1/1. It functions in the pathway cofactor metabolism; pyridoxal 5'-phosphate salvage; pyridoxal 5'-phosphate from pyridoxine 5'-phosphate: step 1/1. Its function is as follows. Catalyzes the oxidation of either pyridoxine 5'-phosphate (PNP) or pyridoxamine 5'-phosphate (PMP) into pyridoxal 5'-phosphate (PLP). The sequence is that of Pyridoxine/pyridoxamine 5'-phosphate oxidase from Alcanivorax borkumensis (strain ATCC 700651 / DSM 11573 / NCIMB 13689 / SK2).